A 141-amino-acid chain; its full sequence is HTH-type transcriptional repressor NsrR (141 aa).

Residues 2-129 (QLTSFTDYGL…DNYTLADLVE (128 aa)) form the HTH rrf2-type domain. The H-T-H motif DNA-binding region spans 28 to 51 (ISEVTDVYGVSRNHMVKIINQLSR). The [2Fe-2S] cluster site is built by Cys91, Cys96, and Cys102.

[2Fe-2S] cluster serves as cofactor.

Its function is as follows. Nitric oxide-sensitive repressor of genes involved in protecting the cell against nitrosative stress. May require iron for activity. In Escherichia coli O139:H28 (strain E24377A / ETEC), this protein is HTH-type transcriptional repressor NsrR.